A 688-amino-acid chain; its full sequence is Translation initiation factor IF-2 (688 aa).

Basic and acidic residues-rich tracts occupy residues 53-62 (GKEKSEKTKE) and 86-95 (KRDDKNEKVN). Residues 53-100 (GKEKSEKTKEEDDEIETTAKNPIKESMNNKKSNKRDDKNEKVNTENAE) are disordered. The region spanning 187-354 (KRSPIITVMG…MILLSSEILE (168 aa)) is the tr-type G domain. Positions 196–203 (GHVDHGKT) are G1. 196–203 (GHVDHGKT) contributes to the GTP binding site. Residues 221-225 (GITQH) form a G2 region. A G3 region spans residues 242-245 (DTPG). Residues 242 to 246 (DTPGH) and 296 to 299 (NKID) contribute to the GTP site. The interval 296–299 (NKID) is G4. The segment at 332 to 334 (SAH) is G5.

Belongs to the TRAFAC class translation factor GTPase superfamily. Classic translation factor GTPase family. IF-2 subfamily.

It is found in the cytoplasm. One of the essential components for the initiation of protein synthesis. Protects formylmethionyl-tRNA from spontaneous hydrolysis and promotes its binding to the 30S ribosomal subunits. Also involved in the hydrolysis of GTP during the formation of the 70S ribosomal complex. The chain is Translation initiation factor IF-2 from Clostridium botulinum (strain Loch Maree / Type A3).